Consider the following 607-residue polypeptide: Elongation factor 4 (607 aa).

One can recognise a tr-type G domain in the interval 11 to 193 (EKIRNFSIIA…QIVEKVPAPQ (183 aa)). GTP-binding positions include 23–28 (DHGKST) and 140–143 (NKID).

The protein belongs to the TRAFAC class translation factor GTPase superfamily. Classic translation factor GTPase family. LepA subfamily.

Its subcellular location is the cell membrane. The catalysed reaction is GTP + H2O = GDP + phosphate + H(+). In terms of biological role, required for accurate and efficient protein synthesis under certain stress conditions. May act as a fidelity factor of the translation reaction, by catalyzing a one-codon backward translocation of tRNAs on improperly translocated ribosomes. Back-translocation proceeds from a post-translocation (POST) complex to a pre-translocation (PRE) complex, thus giving elongation factor G a second chance to translocate the tRNAs correctly. Binds to ribosomes in a GTP-dependent manner. The chain is Elongation factor 4 from Lactococcus lactis subsp. lactis (strain IL1403) (Streptococcus lactis).